A 663-amino-acid chain; its full sequence is Cytochrome bo(3) ubiquinol oxidase subunit 1 (663 aa).

Topologically, residues 1–16 are periplasmic; it reads MFGKLSLDAVPFHEPI. The helical transmembrane segment at 17–35 threads the bilayer; it reads VMVTIAGIILGGLALVGLI. Over 36-52 the chain is Cytoplasmic; that stretch reads TYFGKWTYLWKEWLTSV. Residues 53 to 80 traverse the membrane as a helical segment; the sequence is DHKRLGIMYIIVAIVMLLRGFADAIMMR. Residues Arg71 and Asp75 each contribute to the ubiquinone-8 site. Over 81–95 the chain is Periplasmic; the sequence is SQQALASAGEAGFLP. The helical transmembrane segment at 96-132 threads the bilayer; that stretch reads PHHYDQIFTAHGVIMIFFVAMPFVIGLMNLVVPLQIG. His98 is a binding site for ubiquinone-8. Residue His106 coordinates heme b. Residues 133–137 are Cytoplasmic-facing; that stretch reads ARDVA. The chain crosses the membrane as a helical span at residues 138–161; sequence FPFLNNLSFWFTVVGVILVNVSLG. The Periplasmic portion of the chain corresponds to 162–184; sequence VGEFAQTGWLAYPPLSGIEYSPG. A heme b-binding site is contributed by Trp170. A helical membrane pass occupies residues 185–215; it reads VGVDYWIWSLQLSGIGTTLTGINFFVTILKM. Residues 216–224 lie on the Cytoplasmic side of the membrane; the sequence is RAPGMTMFK. Residues 225 to 260 traverse the membrane as a helical segment; it reads MPVFTWASLCANVLIIASFPILTVTVALLTLDRYLG. Residues 261-270 are Periplasmic-facing; that stretch reads THFFTNDMGG. Residues 271 to 307 traverse the membrane as a helical segment; that stretch reads NMMMYINLIWAWGHPEVYILILPVFGVFSEIAATFSR. His284 contacts Cu(2+). Positions 284–288 form a cross-link, 1'-histidyl-3'-tyrosine (His-Tyr); the sequence is HPEVY. A Fe(II)-heme o-binding site is contributed by Tyr288. Topologically, residues 308–311 are cytoplasmic; that stretch reads KRLF. A helical transmembrane segment spans residues 312–326; the sequence is GYTSLVWATVCITVL. Residues 327–340 are Periplasmic-facing; the sequence is SFIVWLHHFFTMGA. 2 residues coordinate Cu(2+): His333 and His334. Residues 341–369 form a helical membrane-spanning segment; that stretch reads GANVNAFFGITTMIIAIPTGVKIFNWLFT. Residues 370-377 lie on the Cytoplasmic side of the membrane; it reads MYQGRIVF. The chain crosses the membrane as a helical span at residues 378-409; that stretch reads HSAMLWTIGFIVTFSVGGMTGVLLAVPGADFV. The Periplasmic segment spans residues 410 to 412; the sequence is LHN. His411 and His419 together coordinate Fe(II)-heme o. A helical transmembrane segment spans residues 413 to 445; that stretch reads SLFLIAHFHNVIIGGVVFGCFAGMTYWWPKAFG. His421 lines the heme b pocket. The Cytoplasmic portion of the chain corresponds to 446-448; that stretch reads FKL. The chain crosses the membrane as a helical span at residues 449–477; that stretch reads NETWGKRAFWFWIIGFFVAFMPLYALGFM. Topologically, residues 478-489 are periplasmic; that stretch reads GMTRRLSQQIDP. Heme b is bound by residues Arg481 and Arg482. The helical transmembrane segment at 490-521 threads the bilayer; the sequence is QFHTMLMIAASGAVLIALGILCLVIQMYVSIR. Topologically, residues 522–587 are cytoplasmic; sequence DRDQNRDLTG…DHYEEIHMPK (66 aa). The helical transmembrane segment at 588–606 threads the bilayer; that stretch reads NSGAGIVIAAFSTIFGFAM. The Periplasmic portion of the chain corresponds to 607-613; sequence IWHIWWL. The chain crosses the membrane as a helical span at residues 614–632; sequence AIVGFAGMIITWIVKSFDE. Residues 633–663 are Cytoplasmic-facing; that stretch reads DVDYYVPVAEIEKLENQHFDEITKAGLKNGN.

The protein belongs to the heme-copper respiratory oxidase family. The cytochrome bo(3) ubiquinol oxidase complex is a heterooctamer of two A chains, two B chains, two C chains and two D chains. Cu(2+) is required as a cofactor. Heme b serves as cofactor. It depends on Fe(II)-heme o as a cofactor.

It is found in the cell inner membrane. The enzyme catalyses 2 a ubiquinol + O2 + n H(+)(in) = 2 a ubiquinone + 2 H2O + n H(+)(out). Its function is as follows. Cytochrome bo(3) ubiquinol oxidase is the terminal enzyme in the aerobic respiratory chain of E.coli that predominates when cells are grown at high aeration. Catalyzes the four-electron reduction of O2 to water, using a ubiquinol as a membrane soluble electron donor for molecular oxygen reduction; ubiquinol-8 is the natural substrate for E.coli. Has proton pump activity across the membrane in addition to electron transfer, pumping 2 protons/electron and generating a proton motive force. All the redox centers of this enzyme complex are located within the largest subunit, subunit I. Protons are probably pumped via D- and K- channels found in this subunit. This is Cytochrome bo(3) ubiquinol oxidase subunit 1 (cyoB) from Escherichia coli O157:H7.